A 163-amino-acid polypeptide reads, in one-letter code: GPI-anchored protein LLG2 (163 aa).

A signal peptide spans 1-23 (MEISPYCLLSLLPIFLLSGFSLS). Asparagine 52 is a glycosylation site (N-linked (GlcNAc...) asparagine). Serine 135 carries GPI-anchor amidated serine lipidation. Positions 136–163 (DSIPRASTTASLAVLSTFLVLCLLFLSS) are cleaved as a propeptide — removed in mature form.

As to expression, expressed in pollen, pollen tubes, sporophytic pistil tissues, in the early stages of female gametophyte development, and in unfertilized, mature ovules.

The protein localises to the cell membrane. In Arabidopsis thaliana (Mouse-ear cress), this protein is GPI-anchored protein LLG2.